The primary structure comprises 321 residues: Beta-ketoacyl-[acyl-carrier-protein] synthase III (321 aa).

Residues cysteine 113 and histidine 248 contribute to the active site. The segment at 249–253 (QANAR) is ACP-binding. Residue asparagine 278 is part of the active site.

The protein belongs to the thiolase-like superfamily. FabH family. In terms of assembly, homodimer.

The protein localises to the cytoplasm. It catalyses the reaction malonyl-[ACP] + acetyl-CoA + H(+) = 3-oxobutanoyl-[ACP] + CO2 + CoA. Its pathway is lipid metabolism; fatty acid biosynthesis. In terms of biological role, catalyzes the condensation reaction of fatty acid synthesis by the addition to an acyl acceptor of two carbons from malonyl-ACP. Catalyzes the first condensation reaction which initiates fatty acid synthesis and may therefore play a role in governing the total rate of fatty acid production. Possesses both acetoacetyl-ACP synthase and acetyl transacylase activities. Its substrate specificity determines the biosynthesis of branched-chain and/or straight-chain of fatty acids. This is Beta-ketoacyl-[acyl-carrier-protein] synthase III from Erythrobacter litoralis (strain HTCC2594).